A 160-amino-acid chain; its full sequence is 3-hydroxyacyl-[acyl-carrier-protein] dehydratase FabZ (160 aa).

Residue His59 is part of the active site.

This sequence belongs to the thioester dehydratase family. FabZ subfamily.

It localises to the cytoplasm. The enzyme catalyses a (3R)-hydroxyacyl-[ACP] = a (2E)-enoyl-[ACP] + H2O. Functionally, involved in unsaturated fatty acids biosynthesis. Catalyzes the dehydration of short chain beta-hydroxyacyl-ACPs and long chain saturated and unsaturated beta-hydroxyacyl-ACPs. The protein is 3-hydroxyacyl-[acyl-carrier-protein] dehydratase FabZ of Burkholderia thailandensis (strain ATCC 700388 / DSM 13276 / CCUG 48851 / CIP 106301 / E264).